A 26-amino-acid polypeptide reads, in one-letter code: DEAD-box ATP-dependent RNA helicase 1 (26 aa).

The short motif at 1–10 (RELLMGIFEK) is the Q motif element. 11–16 (NGTGKT) serves as a coordination point for ATP. The region spanning 11–26 (NGTGKTAAFVIPLLQK) is the Helicase ATP-binding domain.

This sequence belongs to the DEAD box helicase family. DDX6/DHH1 subfamily.

The protein localises to the cytoplasm. It localises to the P-body. The enzyme catalyses ATP + H2O = ADP + phosphate + H(+). Its function is as follows. ATP-dependent RNA helicase involved in mRNA turnover, and more specifically in mRNA decapping. This chain is DEAD-box ATP-dependent RNA helicase 1, found in Catharanthus roseus (Madagascar periwinkle).